The primary structure comprises 1092 residues: DNA polymerase II large subunit (1092 aa).

It belongs to the archaeal DNA polymerase II family. Heterodimer of a large subunit and a small subunit.

It carries out the reaction DNA(n) + a 2'-deoxyribonucleoside 5'-triphosphate = DNA(n+1) + diphosphate. The catalysed reaction is Exonucleolytic cleavage in the 3'- to 5'-direction to yield nucleoside 5'-phosphates.. In terms of biological role, possesses two activities: a DNA synthesis (polymerase) and an exonucleolytic activity that degrades single-stranded DNA in the 3'- to 5'-direction. Has a template-primer preference which is characteristic of a replicative DNA polymerase. The protein is DNA polymerase II large subunit (polC) of Methanothermobacter thermautotrophicus (strain ATCC 29096 / DSM 1053 / JCM 10044 / NBRC 100330 / Delta H) (Methanobacterium thermoautotrophicum).